Consider the following 399-residue polypeptide: Telomeric repeat-binding factor 2-interacting protein 1 (399 aa).

The interval 1–21 (MAEAMELGKDPNGPTHSSTLF) is disordered. N-acetylalanine is present on alanine 2. In terms of domain architecture, BRCT spans 10–101 (DPNGPTHSST…EKLELEAYRL (92 aa)). Phosphoserine is present on residues serine 36 and serine 43. A Glycyl lysine isopeptide (Lys-Gly) (interchain with G-Cter in SUMO2) cross-link involves residue lysine 114. The region spanning 130 to 190 (QSQAGRMVFT…SMKDRYLKRL (61 aa)) is the Myb-like domain. Residues serine 156 and serine 158 each carry the phosphoserine modification. Lysine 196 participates in a covalent cross-link: Glycyl lysine isopeptide (Lys-Gly) (interchain with G-Cter in SUMO2). Disordered regions lie at residues 199–245 (LGEA…KEEI) and 279–309 (TMCD…VSAP). Phosphoserine occurs at positions 205 and 208. Residues lysine 210, lysine 214, and lysine 242 each participate in a glycyl lysine isopeptide (Lys-Gly) (interchain with G-Cter in SUMO2) cross-link. The segment covering 281–304 (CDDDPCTPEEDSETQPDEEEEEEE) has biased composition (acidic residues). Lysine 372 is covalently cross-linked (Glycyl lysine isopeptide (Lys-Gly) (interchain with G-Cter in SUMO2)). Residues 383 to 399 (KKFGAQNVARRIEFRKK) carry the Nuclear localization signal motif.

This sequence belongs to the RAP1 family. As to quaternary structure, associates with the I-kappa-B-kinase (IKK) core complex, composed of CHUK, IKBKB and IKBKG. Homodimer. Component of the shelterin complex (telosome) composed of TERF1, TERF2, TINF2, TERF2IP ACD and POT1. Interacts with TERF2 (but not TERF1) with its C-terminus. Interacts with SLX4/BTBD12. Interacts with TERF2; the interaction is direct.

Its subcellular location is the nucleus. It is found in the cytoplasm. The protein resides in the chromosome. The protein localises to the telomere. Functionally, acts both as a regulator of telomere function and as a transcription regulator. Involved in the regulation of telomere length and protection as a component of the shelterin complex (telosome). In contrast to other components of the shelterin complex, it is dispensible for telomere capping and does not participate in the protection of telomeres against non-homologous end-joining (NHEJ)-mediated repair. Instead, it is required to negatively regulate telomere recombination and is essential for repressing homology-directed repair (HDR), which can affect telomere length. Does not bind DNA directly: recruited to telomeric double-stranded 5'-TTAGGG-3' repeats via its interaction with TERF2. Independently of its function in telomeres, also acts as a transcription regulator: recruited to extratelomeric 5'-TTAGGG-3' sites via its association with TERF2 or other factors, and regulates gene expression. When cytoplasmic, associates with the I-kappa-B-kinase (IKK) complex and acts as a regulator of the NF-kappa-B signaling by promoting IKK-mediated phosphorylation of RELA/p65, leading to activate expression of NF-kappa-B target genes. The protein is Telomeric repeat-binding factor 2-interacting protein 1 (TERF2IP) of Bos taurus (Bovine).